We begin with the raw amino-acid sequence, 524 residues long: Cytochrome P450 1A1 (524 aa).

The tract at residues 33–44 (TRTWVPKGLKSP) is mitochondrial targeting signal. An O-linked (GlcNAc) serine glycan is attached at S71. Position 228 (F228) interacts with substrate. Heme is bound at residue C461.

This sequence belongs to the cytochrome P450 family. As to quaternary structure, both Cytochrome P450MT2A and Cytochrome P450MT2B interact with cytosolic chaperones HSP70 and HSP90; this interaction is required for initial targeting to mitochondria. P450MT2B interacts (via mitochondrial targeting signal) with TOMM40 (via N-terminus); this interaction is required for translocation across the mitochondrial outer membrane. The cofactor is heme. In terms of processing, two forms; MT2A (long form) and MT2B (short form); are produced by NH2-terminal proteolytic cleavage. This cleavage activates a cryptic mitochondrial targeting signal. In terms of tissue distribution, liver.

It is found in the cytoplasm. The protein localises to the endoplasmic reticulum membrane. It localises to the mitochondrion inner membrane. Its subcellular location is the microsome membrane. It catalyses the reaction an organic molecule + reduced [NADPH--hemoprotein reductase] + O2 = an alcohol + oxidized [NADPH--hemoprotein reductase] + H2O + H(+). The catalysed reaction is estrone + reduced [NADPH--hemoprotein reductase] + O2 = 2-hydroxyestrone + oxidized [NADPH--hemoprotein reductase] + H2O + H(+). The enzyme catalyses estrone + reduced [NADPH--hemoprotein reductase] + O2 = 4-hydroxyestrone + oxidized [NADPH--hemoprotein reductase] + H2O + H(+). It carries out the reaction estrone + reduced [NADPH--hemoprotein reductase] + O2 = 6alpha-hydroxyestrone + oxidized [NADPH--hemoprotein reductase] + H2O + H(+). It catalyses the reaction estrone + reduced [NADPH--hemoprotein reductase] + O2 = 15alpha-hydroxyestrone + oxidized [NADPH--hemoprotein reductase] + H2O + H(+). The catalysed reaction is estrone + reduced [NADPH--hemoprotein reductase] + O2 = 16alpha-hydroxyestrone + oxidized [NADPH--hemoprotein reductase] + H2O + H(+). The enzyme catalyses 17beta-estradiol + reduced [NADPH--hemoprotein reductase] + O2 = 2-hydroxy-17beta-estradiol + oxidized [NADPH--hemoprotein reductase] + H2O + H(+). It carries out the reaction 17beta-estradiol + reduced [NADPH--hemoprotein reductase] + O2 = 4-hydroxy-17beta-estradiol + oxidized [NADPH--hemoprotein reductase] + H2O + H(+). It catalyses the reaction 17beta-estradiol + reduced [NADPH--hemoprotein reductase] + O2 = 6alpha-hydroxy-17beta-estradiol + oxidized [NADPH--hemoprotein reductase] + H2O + H(+). The catalysed reaction is 17beta-estradiol + reduced [NADPH--hemoprotein reductase] + O2 = 7alpha-hydroxy-17beta-estradiol + oxidized [NADPH--hemoprotein reductase] + H2O + H(+). The enzyme catalyses 17beta-estradiol + reduced [NADPH--hemoprotein reductase] + O2 = 15alpha-hydroxy-17beta-estradiol + oxidized [NADPH--hemoprotein reductase] + H2O + H(+). It carries out the reaction (5Z,8Z,11Z)-eicosatrienoate + reduced [NADPH--hemoprotein reductase] + O2 = 19-hydroxy-(5Z,8Z,11Z)-eicosatrienoate + oxidized [NADPH--hemoprotein reductase] + H2O + H(+). It catalyses the reaction (5Z,8Z,11Z,14Z)-eicosatetraenoate + reduced [NADPH--hemoprotein reductase] + O2 = 16-hydroxy-(5Z,8Z,11Z,14Z)-eicosatetraenoate + oxidized [NADPH--hemoprotein reductase] + H2O + H(+). The catalysed reaction is (5Z,8Z,11Z,14Z)-eicosatetraenoate + reduced [NADPH--hemoprotein reductase] + O2 = 17-hydroxy-(5Z,8Z,11Z,14Z)-eicosatetraenoate + oxidized [NADPH--hemoprotein reductase] + H2O + H(+). The enzyme catalyses (5Z,8Z,11Z,14Z)-eicosatetraenoate + reduced [NADPH--hemoprotein reductase] + O2 = 18-hydroxy-(5Z,8Z,11Z,14Z)-eicosatetraenoate + oxidized [NADPH--hemoprotein reductase] + H2O + H(+). It carries out the reaction (5Z,8Z,11Z,14Z)-eicosatetraenoate + reduced [NADPH--hemoprotein reductase] + O2 = 19-hydroxy-(5Z,8Z,11Z,14Z)-eicosatetraenoate + oxidized [NADPH--hemoprotein reductase] + H2O + H(+). It catalyses the reaction (5Z,8Z,11Z,14Z,17Z)-eicosapentaenoate + reduced [NADPH--hemoprotein reductase] + O2 = 19-hydroxy-(5Z,8Z,11Z,14Z,17Z)-eicosapentaenoate + oxidized [NADPH--hemoprotein reductase] + H2O + H(+). The catalysed reaction is (5Z,8Z,11Z,14Z)-eicosatetraenoate + reduced [NADPH--hemoprotein reductase] + O2 = (8R,9S)-epoxy-(5Z,11Z,14Z)-eicosatrienoate + oxidized [NADPH--hemoprotein reductase] + H2O + H(+). The enzyme catalyses (5Z,8Z,11Z,14Z)-eicosatetraenoate + reduced [NADPH--hemoprotein reductase] + O2 = (11R,12S)-epoxy-(5Z,8Z,14Z)-eicosatrienoate + oxidized [NADPH--hemoprotein reductase] + H2O + H(+). It carries out the reaction (5Z,8Z,11Z,14Z)-eicosatetraenoate + reduced [NADPH--hemoprotein reductase] + O2 = (11S,12R)-epoxy-(5Z,8Z,14Z)-eicosatrienoate + oxidized [NADPH--hemoprotein reductase] + H2O + H(+). It catalyses the reaction (5Z,8Z,11Z,14Z)-eicosatetraenoate + reduced [NADPH--hemoprotein reductase] + O2 = (14R,15S)-epoxy-(5Z,8Z,11Z)-eicosatrienoate + oxidized [NADPH--hemoprotein reductase] + H2O + H(+). The catalysed reaction is (5Z,8Z,11Z,14Z,17Z)-eicosapentaenoate + reduced [NADPH--hemoprotein reductase] + O2 = (17R,18S)-epoxy-(5Z,8Z,11Z,14Z)-eicosatetraenoate + oxidized [NADPH--hemoprotein reductase] + H2O + H(+). The enzyme catalyses (4Z,7Z,10Z,13Z,16Z,19Z)-docosahexaenoate + reduced [NADPH--hemoprotein reductase] + O2 = (19S,20R)-epoxy-(4Z,7Z,10Z,13Z,16Z)-docosapentaenoate + oxidized [NADPH--hemoprotein reductase] + H2O + H(+). It carries out the reaction (4Z,7Z,10Z,13Z,16Z,19Z)-docosahexaenoate + reduced [NADPH--hemoprotein reductase] + O2 = (19R,20S)-epoxy-(4Z,7Z,10Z,13Z,16Z)-docosapentaenoate + oxidized [NADPH--hemoprotein reductase] + H2O + H(+). It catalyses the reaction all-trans-retinol + reduced [NADPH--hemoprotein reductase] + O2 = all-trans-retinal + oxidized [NADPH--hemoprotein reductase] + 2 H2O + H(+). The catalysed reaction is all-trans-retinal + reduced [NADPH--hemoprotein reductase] + O2 = all-trans-retinoate + oxidized [NADPH--hemoprotein reductase] + H2O + 2 H(+). The enzyme catalyses (13S)-hydroperoxy-(9Z,11E)-octadecadienoate = 13-oxo-(9Z,11E)-octadecadienoate + H2O. It carries out the reaction (12S)-hydroperoxy-(5Z,8Z,10E,14Z)-eicosatetraenoate = 12-oxo-(5Z,8Z,10E,14Z)-eicosatetraenoate + H2O. It catalyses the reaction (15S)-hydroperoxy-(5Z,8Z,11Z,13E)-eicosatetraenoate = 15-oxo-(5Z,8Z,11Z,13E)-eicosatetraenoate + H2O. The catalysed reaction is (5S)-hydroperoxy-(6E,8Z,11Z,14Z)-eicosatetraenoate = 5-oxo-(6E,8Z,11Z,14Z)-eicosatetraenoate + H2O. The protein operates within steroid hormone biosynthesis. Its pathway is lipid metabolism; fatty acid metabolism. It functions in the pathway cofactor metabolism; retinol metabolism. Its function is as follows. A cytochrome P450 monooxygenase involved in the metabolism of various endogenous substrates, including fatty acids, steroid hormones and vitamins. Mechanistically, uses molecular oxygen inserting one oxygen atom into a substrate, and reducing the second into a water molecule, with two electrons provided by NADPH via cytochrome P450 reductase (CPR; NADPH-ferrihemoprotein reductase). Catalyzes the hydroxylation of carbon-hydrogen bonds. Exhibits high catalytic activity for the formation of hydroxyestrogens from estrone (E1) and 17beta-estradiol (E2), namely 2-hydroxy E1 and E2, as well as D-ring hydroxylated E1 and E2 at the C15alpha and C16alpha positions. Displays different regioselectivities for polyunsaturated fatty acids (PUFA) hydroxylation. Catalyzes the epoxidation of double bonds of certain PUFA. Converts arachidonic acid toward epoxyeicosatrienoic acid (EET) regioisomers, 8,9-, 11,12-, and 14,15-EET, that function as lipid mediators in the vascular system. Displays an absolute stereoselectivity in the epoxidation of eicosapentaenoic acid (EPA) producing the 17(R),18(S) enantiomer. May play an important role in all-trans retinoic acid biosynthesis in extrahepatic tissues. Catalyzes two successive oxidative transformation of all-trans retinol to all-trans retinal and then to the active form all-trans retinoic acid. May also participate in eicosanoids metabolism by converting hydroperoxide species into oxo metabolites (lipoxygenase-like reaction, NADPH-independent). The sequence is that of Cytochrome P450 1A1 from Rattus norvegicus (Rat).